Reading from the N-terminus, the 311-residue chain is Cell division protein ZipA (311 aa).

Topologically, residues 1–5 (MQELR) are periplasmic. A helical membrane pass occupies residues 6–26 (FVLIVVGALAIMALLFHGLWT). Residues 27 to 311 (SKKEGKAKFG…QIVEFKAANA (285 aa)) lie on the Cytoplasmic side of the membrane. The segment covering 32-54 (KAKFGDKPLSKLDLGESEPKESE) has biased composition (basic and acidic residues). Residues 32–60 (KAKFGDKPLSKLDLGESEPKESEMYVAPE) form a disordered region.

This sequence belongs to the ZipA family. Interacts with FtsZ via their C-terminal domains.

It localises to the cell inner membrane. Its function is as follows. Essential cell division protein that stabilizes the FtsZ protofilaments by cross-linking them and that serves as a cytoplasmic membrane anchor for the Z ring. Also required for the recruitment to the septal ring of downstream cell division proteins. The polypeptide is Cell division protein ZipA (Vibrio vulnificus (strain CMCP6)).